The following is a 60-amino-acid chain: Large ribosomal subunit protein bL32 (60 aa).

Positions 1–28 (MAVQQNKKSRSKRDMRRSHDALTGPTLS) are disordered. Residues 7 to 16 (KKSRSKRDMR) show a composition bias toward basic residues.

Belongs to the bacterial ribosomal protein bL32 family.

The sequence is that of Large ribosomal subunit protein bL32 from Cellvibrio japonicus (strain Ueda107) (Pseudomonas fluorescens subsp. cellulosa).